A 164-amino-acid chain; its full sequence is Large ribosomal subunit protein bL9 (164 aa).

This sequence belongs to the bacterial ribosomal protein bL9 family.

Binds to the 23S rRNA. The protein is Large ribosomal subunit protein bL9 of Psychrobacter sp. (strain PRwf-1).